Consider the following 476-residue polypeptide: Casein kinase 1-like protein 7 (476 aa).

The 270-residue stretch at 9–278 (FKLGKKIGSG…LKRLFRDLFI (270 aa)) folds into the Protein kinase domain. Residues 15 to 23 (IGSGSFGEL) and Lys38 each bind ATP. The Proton acceptor role is filled by Asp128. 2 disordered regions span residues 299 to 324 (GSSSGSSSRTRHHTTAKPGFNADPIE) and 340 to 464 (PGAV…TRED). Over residues 357 to 367 (PRDRSRSRNSD) the composition is skewed to basic and acidic residues. The segment covering 382–422 (ANSSSRYRASSSRKAVAASSSRPSSAGGPSESRTSSRLVSS) has biased composition (low complexity). Over residues 423-432 (SGGGGSGSGN) the composition is skewed to gly residues.

The protein belongs to the protein kinase superfamily. CK1 Ser/Thr protein kinase family. Casein kinase I subfamily. In terms of assembly, monomer. Autophosphorylated.

It is found in the cytoplasm. It catalyses the reaction L-seryl-[protein] + ATP = O-phospho-L-seryl-[protein] + ADP + H(+). It carries out the reaction L-threonyl-[protein] + ATP = O-phospho-L-threonyl-[protein] + ADP + H(+). Functionally, casein kinases are operationally defined by their preferential utilization of acidic proteins such as caseins as substrates. It can phosphorylate a large number of proteins. The sequence is that of Casein kinase 1-like protein 7 from Arabidopsis thaliana (Mouse-ear cress).